The following is a 341-amino-acid chain: METSIQQLQQEIDGYQIRNAKELEAFKLEFTVRKGKIAGLFGQLKTVDSADRPRIGQLLNALKLSAEAKVADAESLFAQNAETEAPALDLSLPGRRSFLGSEHPVQKVLGDMKRIFTAMGFGIATGPELELDEYNFDRLNFPPNHPARDMQDTFFITRGQEEGDVLLRTHTSPVQVRVMLDEKPPIRVICPGKVYRNEAISARSYCVFHQLEGLYIDKNVSFADLKATIYSFARQMFGSDVKLRFRPSFFPFTEPSAEVDVTCYLCGGKGCRVCKKSGWLEIMGCGMVHPNVMRNCGIDPEEWTGYAFGMGVDRTALLRYKIDDIRLFFENDVRMLSQFMA.

E254 contributes to the Mg(2+) binding site.

This sequence belongs to the class-II aminoacyl-tRNA synthetase family. Phe-tRNA synthetase alpha subunit type 1 subfamily. In terms of assembly, tetramer of two alpha and two beta subunits. The cofactor is Mg(2+).

The protein resides in the cytoplasm. The catalysed reaction is tRNA(Phe) + L-phenylalanine + ATP = L-phenylalanyl-tRNA(Phe) + AMP + diphosphate + H(+). This is Phenylalanine--tRNA ligase alpha subunit from Chlorobaculum tepidum (strain ATCC 49652 / DSM 12025 / NBRC 103806 / TLS) (Chlorobium tepidum).